The primary structure comprises 152 residues: UPF0225 protein YchJ (152 aa).

Belongs to the UPF0225 family.

The chain is UPF0225 protein YchJ from Escherichia coli O6:K15:H31 (strain 536 / UPEC).